The sequence spans 279 residues: Thioredoxin-like 1-1, chloroplastic (279 aa).

In terms of domain architecture, Thioredoxin spans 56–202 (ALTERKARPL…FKDALAKHGP (147 aa)). Catalysis depends on nucleophile residues Cys125 and Cys128. Residues Cys125 and Cys128 are joined by a disulfide bond.

Belongs to the thioredoxin family.

Probable thiol-disulfide oxidoreductase that may participate in various redox reactions. The sequence is that of Thioredoxin-like 1-1, chloroplastic from Oryza sativa subsp. japonica (Rice).